Here is a 434-residue protein sequence, read N- to C-terminus: 3-phosphoshikimate 1-carboxyvinyltransferase (434 aa).

3-phosphoshikimate is bound by residues Lys-22, Ser-23, and Arg-27. A phosphoenolpyruvate-binding site is contributed by Lys-22. Residues Gly-93 and Arg-121 each coordinate phosphoenolpyruvate. Residues Ser-168, Ser-169, Gln-170, Ser-199, Asp-320, and Lys-347 each contribute to the 3-phosphoshikimate site. Residue Gln-170 participates in phosphoenolpyruvate binding. The Proton acceptor role is filled by Asp-320. 3 residues coordinate phosphoenolpyruvate: Arg-351, Arg-394, and Lys-419.

It belongs to the EPSP synthase family. In terms of assembly, monomer.

The protein resides in the cytoplasm. The catalysed reaction is 3-phosphoshikimate + phosphoenolpyruvate = 5-O-(1-carboxyvinyl)-3-phosphoshikimate + phosphate. Its pathway is metabolic intermediate biosynthesis; chorismate biosynthesis; chorismate from D-erythrose 4-phosphate and phosphoenolpyruvate: step 6/7. Functionally, catalyzes the transfer of the enolpyruvyl moiety of phosphoenolpyruvate (PEP) to the 5-hydroxyl of shikimate-3-phosphate (S3P) to produce enolpyruvyl shikimate-3-phosphate and inorganic phosphate. This Burkholderia ambifaria (strain ATCC BAA-244 / DSM 16087 / CCUG 44356 / LMG 19182 / AMMD) (Burkholderia cepacia (strain AMMD)) protein is 3-phosphoshikimate 1-carboxyvinyltransferase.